An 879-amino-acid polypeptide reads, in one-letter code: Protein translocase subunit SecA (879 aa).

Residues Q86, 104-108, and D500 each bind ATP; that span reads GEGKT. Residues C863, C865, C874, and H875 each contribute to the Zn(2+) site.

Belongs to the SecA family. As to quaternary structure, monomer and homodimer. Part of the essential Sec protein translocation apparatus which comprises SecA, SecYEG and auxiliary proteins SecDF-YajC and YidC. Requires Zn(2+) as cofactor.

It is found in the cell inner membrane. The protein resides in the cytoplasm. The catalysed reaction is ATP + H2O + cellular proteinSide 1 = ADP + phosphate + cellular proteinSide 2.. Functionally, part of the Sec protein translocase complex. Interacts with the SecYEG preprotein conducting channel. Has a central role in coupling the hydrolysis of ATP to the transfer of proteins into and across the cell membrane, serving both as a receptor for the preprotein-SecB complex and as an ATP-driven molecular motor driving the stepwise translocation of polypeptide chains across the membrane. The protein is Protein translocase subunit SecA of Orientia tsutsugamushi (strain Ikeda) (Rickettsia tsutsugamushi).